The chain runs to 965 residues: Iron-responsive element-binding protein 2 (965 aa).

The segment at 142–170 is disordered; sequence NAPNPGGGEAQKPTAKLSPLKGQPRKLPC. [4Fe-4S] cluster contacts are provided by Cys514, Cys580, and Cys583.

It belongs to the aconitase/IPM isomerase family. The cofactor is [4Fe-4S] cluster. Ubiquitinated and degraded by the proteasome in presence of high level of iron and oxygen.

The protein localises to the cytoplasm. Its function is as follows. RNA-binding protein that binds to iron-responsive elements (IRES), which are stem-loop structures found in the 5'-UTR of ferritin, and delta aminolevulinic acid synthase mRNAs, and in the 3'-UTR of transferrin receptor mRNA. Binding to the IRE element in ferritin results in the repression of its mRNA translation. Binding of the protein to the transferrin receptor mRNA inhibits the degradation of this otherwise rapidly degraded mRNA. The sequence is that of Iron-responsive element-binding protein 2 (IREB2) from Gallus gallus (Chicken).